We begin with the raw amino-acid sequence, 378 residues long: Ribosomal RNA large subunit methyltransferase G (378 aa).

The protein belongs to the methyltransferase superfamily. RlmG family.

It is found in the cytoplasm. It carries out the reaction guanosine(1835) in 23S rRNA + S-adenosyl-L-methionine = N(2)-methylguanosine(1835) in 23S rRNA + S-adenosyl-L-homocysteine + H(+). Its function is as follows. Specifically methylates the guanine in position 1835 (m2G1835) of 23S rRNA. In Escherichia coli O157:H7, this protein is Ribosomal RNA large subunit methyltransferase G.